The following is a 275-amino-acid chain: Elongation factor Ts (275 aa).

The segment at 76-79 (TDFV) is involved in Mg(2+) ion dislocation from EF-Tu.

Belongs to the EF-Ts family.

Its subcellular location is the cytoplasm. Functionally, associates with the EF-Tu.GDP complex and induces the exchange of GDP to GTP. It remains bound to the aminoacyl-tRNA.EF-Tu.GTP complex up to the GTP hydrolysis stage on the ribosome. The polypeptide is Elongation factor Ts (Mycobacterium avium (strain 104)).